A 316-amino-acid polypeptide reads, in one-letter code: D-alanine--D-alanine ligase (316 aa).

The ATP-grasp domain maps to 108–310; the sequence is ERYEELSVVK…FDELVDLIIK (203 aa). Position 138–193 (138–193) interacts with ATP; it reads EEKIGLPCVVKPRKEGSSIGTHICFSKEELLDALKNEFKNYDEMIVQEYIKGKEIT. Mg(2+) contacts are provided by aspartate 265, glutamate 277, and asparagine 279.

This sequence belongs to the D-alanine--D-alanine ligase family. Mg(2+) serves as cofactor. Requires Mn(2+) as cofactor.

Its subcellular location is the cytoplasm. It carries out the reaction 2 D-alanine + ATP = D-alanyl-D-alanine + ADP + phosphate + H(+). It participates in cell wall biogenesis; peptidoglycan biosynthesis. Cell wall formation. The sequence is that of D-alanine--D-alanine ligase from Fervidobacterium nodosum (strain ATCC 35602 / DSM 5306 / Rt17-B1).